A 319-amino-acid polypeptide reads, in one-letter code: 2,3,4,5-tetrahydropyridine-2,6-dicarboxylate N-succinyltransferase (319 aa).

2 residues coordinate Mg(2+): aspartate 167 and glutamate 184. Glutamate 200 serves as the catalytic Acyl-anhydride intermediate. Succinyl-CoA contacts are provided by residues arginine 202, glycine 217, serine 220, alanine 243, 258–259 (EA), and lysine 278.

The protein belongs to the type 2 tetrahydrodipicolinate N-succinyltransferase family. In terms of assembly, homotrimer.

It localises to the cytoplasm. It carries out the reaction (S)-2,3,4,5-tetrahydrodipicolinate + succinyl-CoA + H2O = (S)-2-succinylamino-6-oxoheptanedioate + CoA. Its pathway is amino-acid biosynthesis; L-lysine biosynthesis via DAP pathway; LL-2,6-diaminopimelate from (S)-tetrahydrodipicolinate (succinylase route): step 1/3. Its function is as follows. Catalyzes the conversion of the cyclic tetrahydrodipicolinate (THDP) into the acyclic N-succinyl-L-2-amino-6-oxopimelate using succinyl-CoA. In Salinispora tropica (strain ATCC BAA-916 / DSM 44818 / JCM 13857 / NBRC 105044 / CNB-440), this protein is 2,3,4,5-tetrahydropyridine-2,6-dicarboxylate N-succinyltransferase.